Reading from the N-terminus, the 590-residue chain is DNA mismatch repair protein MutL (590 aa).

The protein belongs to the DNA mismatch repair MutL/HexB family.

In terms of biological role, this protein is involved in the repair of mismatches in DNA. It is required for dam-dependent methyl-directed DNA mismatch repair. May act as a 'molecular matchmaker', a protein that promotes the formation of a stable complex between two or more DNA-binding proteins in an ATP-dependent manner without itself being part of a final effector complex. The chain is DNA mismatch repair protein MutL from Caldanaerobacter subterraneus subsp. tengcongensis (strain DSM 15242 / JCM 11007 / NBRC 100824 / MB4) (Thermoanaerobacter tengcongensis).